The chain runs to 255 residues: MAPRRTRKVSQDSDGQADDQHSFEQKIRLTKRKELFIQQFEKEAQDRINEMEANLNKLLATVDRVFKIELMKMPLSLHTTLIKDLMNDDDTSVGEVTMALKCASPEIQKPLSRKPSKKALNALAGQQRSSSQSKTPIEGQKKPTKKTLHSSKSTGSLRCASTINAKRTQGRVVKLSDQANALGVQFRQTSRSVGDELMMATATIVTSHGETLFLSEDNKDEINVELLDDAAVNQMRKIKELMDYLCNKVRINNTC.

Disordered stretches follow at residues 1-24 and 107-156; these read MAPR…HSFE and IQKP…STGS. Residues 124–135 are compositionally biased toward polar residues; that stretch reads AGQQRSSSQSKT.

It belongs to the borealin family. As to quaternary structure, component of the CPC complex.

It is found in the nucleus. Its subcellular location is the chromosome. It localises to the centromere. Its function is as follows. Component of the chromosomal passenger complex (CPC), a complex that acts as a key regulator of mitosis. The CPC complex has essential functions at the centromere in ensuring correct chromosome alignment and segregation and is required for chromatin-induced microtubule stabilization and spindle assembly. This Danio rerio (Zebrafish) protein is Borealin-2 (cdca9).